Reading from the N-terminus, the 235-residue chain is Sugar fermentation stimulation protein homolog (235 aa).

Belongs to the SfsA family.

The chain is Sugar fermentation stimulation protein homolog from Pseudomonas aeruginosa (strain LESB58).